Here is a 136-residue protein sequence, read N- to C-terminus: Ribosome-binding factor A (136 aa).

Belongs to the RbfA family. In terms of assembly, monomer. Binds 30S ribosomal subunits, but not 50S ribosomal subunits or 70S ribosomes.

It localises to the cytoplasm. Its function is as follows. One of several proteins that assist in the late maturation steps of the functional core of the 30S ribosomal subunit. Associates with free 30S ribosomal subunits (but not with 30S subunits that are part of 70S ribosomes or polysomes). Required for efficient processing of 16S rRNA. May interact with the 5'-terminal helix region of 16S rRNA. This Rhizobium etli (strain ATCC 51251 / DSM 11541 / JCM 21823 / NBRC 15573 / CFN 42) protein is Ribosome-binding factor A.